The following is a 570-amino-acid chain: Small ribosomal subunit protein uS2c (570 aa).

The tract at residues 1 to 306 (MLNKKPPYLI…IKLNPLSTPQ (306 aa)) is N-terminal extension. 2 consecutive TRAM domains span residues 28 to 89 (KLIP…KLIK) and 104 to 169 (ALTP…VATV).

Belongs to the universal ribosomal protein uS2 family.

The protein resides in the plastid. It is found in the chloroplast. This Chlamydomonas reinhardtii (Chlamydomonas smithii) protein is Small ribosomal subunit protein uS2c (rps2-1).